The sequence spans 369 residues: Queuine tRNA-ribosyltransferase (369 aa).

Asp-89 acts as the Proton acceptor in catalysis. Residues Asp-89–Phe-93, Asp-142, Gln-184, and Gly-211 each bind substrate. The RNA binding stretch occupies residues Gly-242–Leu-248. The active-site Nucleophile is the Asp-261. The RNA binding; important for wobble base 34 recognition stretch occupies residues Thr-266–Arg-270. Zn(2+) is bound by residues Cys-299, Cys-301, Cys-304, and His-330.

It belongs to the queuine tRNA-ribosyltransferase family. Homodimer. Within each dimer, one monomer is responsible for RNA recognition and catalysis, while the other monomer binds to the replacement base PreQ1. The cofactor is Zn(2+).

It carries out the reaction 7-aminomethyl-7-carbaguanine + guanosine(34) in tRNA = 7-aminomethyl-7-carbaguanosine(34) in tRNA + guanine. The protein operates within tRNA modification; tRNA-queuosine biosynthesis. Functionally, catalyzes the base-exchange of a guanine (G) residue with the queuine precursor 7-aminomethyl-7-deazaguanine (PreQ1) at position 34 (anticodon wobble position) in tRNAs with GU(N) anticodons (tRNA-Asp, -Asn, -His and -Tyr). Catalysis occurs through a double-displacement mechanism. The nucleophile active site attacks the C1' of nucleotide 34 to detach the guanine base from the RNA, forming a covalent enzyme-RNA intermediate. The proton acceptor active site deprotonates the incoming PreQ1, allowing a nucleophilic attack on the C1' of the ribose to form the product. After dissociation, two additional enzymatic reactions on the tRNA convert PreQ1 to queuine (Q), resulting in the hypermodified nucleoside queuosine (7-(((4,5-cis-dihydroxy-2-cyclopenten-1-yl)amino)methyl)-7-deazaguanosine). This Thermotoga neapolitana (strain ATCC 49049 / DSM 4359 / NBRC 107923 / NS-E) protein is Queuine tRNA-ribosyltransferase.